We begin with the raw amino-acid sequence, 267 residues long: X-box-binding protein 1 (267 aa).

Topologically, residues 1-180 (MVVVAAAPSA…VQAQLSPPQN (180 aa)) are cytoplasmic. Positions 35–56 (VPGPRAAGSEASGTPQARKRQR) are disordered. S61 is modified (phosphoserine). Residues 63–126 (EEKALRRKLK…HGLVVENQEL (64 aa)) enclose the bZIP domain. Positions 65–87 (KALRRKLKNRVAAQTARDRKKAR) are basic motif. The interval 69–85 (RKLKNRVAAQTARDRKK) is nuclear localization signal (NLS). The tract at residues 91–126 (LEQQVVDLEEENHKLQLENQLLREKTHGLVVENQEL) is leucine-zipper. A helical; Signal-anchor for type II membrane protein membrane pass occupies residues 181 to 198 (IFPWTLTLLPLQILSLIS). Residues 199–267 (FWAFWTSWTL…FVLTMYTPSL (69 aa)) lie on the Lumenal side of the membrane. Residues 230–256 (QKDLVPYQPPFLCQWGPHQPSWKPLMN) are necessary for the translational pausing of its own mRNA.

The protein belongs to the bZIP family. In terms of assembly, isoform 1 interacts with HM13. Isoform 1 interacts with RNF139; the interaction induces ubiquitination and degradation of isoform 1. Isoform 1 interacts (via luminal domain) with DERL1; the interaction obviates the need for ectodomain shedding prior HM13/SPP-mediated XBP1 isoform 1 cleavage. Isoform 1 interacts with isoform 2; the interaction sequesters isoform 2 from the nucleus and enhances isoform 2 degradation in the cytoplasm. Isoform 1 interacts with HDAC3 and AKT1; the interactions occur in endothelial cell (EC) under disturbed flow. Isoform 1 interacts with the oncoprotein FOS. Isoform 2 interacts with ATF6; the interaction occurs in a ER stress-dependent manner and is required for DNA binding to the unfolded protein response element (UPRE). Isoform 2 interacts with PIK3R1; the interaction is direct and induces translocation of XBP1 isoform 2 into the nucleus and the unfolded protein response (UPR) XBP1-dependent target genes activation in a ER stress- and/or insulin-dependent but PI3K-independent manner. Isoform 2 interacts with SIRT1. Isoform 2 interacts with PIK3R1 and PIK3R2; the interactions are direct and induce translocation of XBP1 isoform 2 into the nucleus and the unfolded protein response (UPR) XBP1-dependent target genes activation in a ER stress- and/or insulin-dependent but PI3K-independent manner. Isoform 2 interacts with FOXO1; the interaction is direct and leads to FOXO1 ubiquitination and degradation via the proteasome pathway in hepatocytes. Acetylated by EP300; acetylation positively regulates the transcriptional activity of XBP1 isoform 2. Isoform 2 is deacetylated by SIRT1; deacetylation negatively regulates the transcriptional activity of XBP1 isoform 2. Post-translationally, ubiquitinated, leading to proteasomal degradation in response to ER stress. In terms of processing, X-box-binding protein 1, cytoplasmic form and luminal form are produced by intramembrane proteolytic cleavage of ER membrane-anchored isoform 1 triggered by HM13/SPP in a DERL1-RNF139-dependent and VCP/p97-independent manner. X-box-binding protein 1, luminal form is ubiquitinated leading to proteasomal degradation. In terms of tissue distribution, isoform 1 and isoform 2 are expressed at higher level in branch curves of vessel walls and in atherosclerotic plaques relative to healthy segments of the same aortas (at protein level). Expressed in skeletal muscles, plasma cells and pancreatic beta cells. Isoform 1 and isoform 2 are expressed in gonadal adipose tissue. Isoform 1 is expressed in inguinal adipose tissue.

The protein resides in the endoplasmic reticulum. It localises to the nucleus. It is found in the cytoplasm. The protein localises to the endoplasmic reticulum membrane. Its subcellular location is the membrane. Functionally, functions as a transcription factor during endoplasmic reticulum stress by regulating the unfolded protein response (UPR). Required for cardiac myogenesis and hepatogenesis during embryonic development and the development of secretory tissues such as exocrine pancreas and salivary gland. Involved in differentiation of B lymphocytes to plasma cells and production of immunoglobulins. Modulates the cellular response to ER stress in a PIK3R-dependent manner. Binds to the cis-acting X box present in the promoter regions of major histocompatibility complex class II genes. Involved in VEGF-induced endothelial cell (EC) proliferation and retinal blood vessel formation during embryonic development but also for angiogenesis in adult tissues under ischemic conditions. Also functions as a major regulator of the UPR in obesity-induced insulin resistance and type 2 diabetes for the management of obesity and diabetes prevention. In terms of biological role, plays a role in the unconventional cytoplasmic splicing processing of its own mRNA triggered by the endoplasmic reticulum (ER) transmembrane endoribonuclease ERN1: upon ER stress, the emerging XBP1 polypeptide chain, as part of a mRNA-ribosome-nascent chain (R-RNC) complex, cotranslationally recruits its own unprocessed mRNA through transient docking to the ER membrane and translational pausing, therefore facilitating efficient IRE1-mediated XBP1 mRNA isoform 2 production. In endothelial cells (EC), associated with KDR, promotes IRE1-mediated XBP1 mRNA isoform 2 production in a vascular endothelial growth factor (VEGF)-dependent manner, leading to EC proliferation and angiogenesis. Functions as a negative feed-back regulator of the potent transcription factor XBP1 isoform 2 protein levels through proteasome-mediated degradation, thus preventing the constitutive activation of the ER stress response signaling pathway. Inhibits the transactivation activity of XBP1 isoform 2 in myeloma cells. Acts as a weak transcriptional factor. Together with HDAC3, contributes to the activation of NFE2L2-mediated HMOX1 transcription factor gene expression in a PI(3)K/mTORC2/Akt-dependent signaling pathway leading to EC survival under disturbed flow/oxidative stress. Binds to the ER stress response element (ERSE) upon ER stress. Binds to the consensus 5'-GATGACGTG[TG]N(3)[AT]T-3' sequence related to cAMP responsive element (CRE)-like sequences. Binds the Tax-responsive element (TRE) present in the long terminal repeat (LTR) of T-cell leukemia virus type 1 (HTLV-I) and to the TPA response elements (TRE). Associates preferentially to the HDAC3 gene promoter region in a static flow-dependent manner. Binds to the CDH5/VE-cadherin gene promoter region. Functions as a stress-inducible potent transcriptional activator during endoplasmic reticulum (ER) stress by inducing unfolded protein response (UPR) target genes via binding to the UPR element (UPRE). Up-regulates target genes encoding ER chaperones and ER-associated degradation (ERAD) components to enhance the capacity of productive folding and degradation mechanism, respectively, in order to maintain the homeostasis of the ER under ER stress. Plays a role in the production of immunoglobulins and interleukin-6 in the presence of stimuli required for plasma cell differentiation, and promotes as well membrane phospholipid biosynthesis necessary for ER expansion. Contributes to the VEGF-induced endothelial cell (EC) growth and proliferation in a Akt/GSK-dependent and/or -independent signaling pathway, respectively, leading to beta-catenin nuclear translocation and E2F2 gene expression. Promotes umbilical vein EC apoptosis and atherosclerotisis development in a caspase-dependent signaling pathway, and contributes to VEGF-induced EC proliferation and angiogenesis in adult tissues under ischemic conditions. Involved in the regulation of endostatin-induced autophagy in EC through BECN1 transcriptional activation. Plays a role as an oncogene by promoting tumor progression: stimulates zinc finger protein SNAI1 transcription to induce epithelial-to-mesenchymal (EMT) transition, cell migration and invasion of breast cancer cells. Involved in adipocyte differentiation by regulating lipogenic gene expression during lactation. Plays a role in the survival of both dopaminergic neurons of the substantia nigra pars compacta (SNpc), by maintaining protein homeostasis and of myeloma cells. Increases insulin sensitivity in the liver as a response to a high carbohydrate diet, resulting in improved glucose tolerance. Also improves glucose homeostasis in an ER stress- and/or insulin-independent manner through both binding and proteasome-induced degradation of the transcription factor FOXO1, hence resulting in suppression of gluconeogenic genes expression and in a reduction of blood glucose levels. Controls the induction of de novo fatty acid synthesis in hepatocytes by regulating the expression of a subset of lipogenic genes in an ER stress- and UPR-independent manner. Binds to the 5'-CCACG-3' motif in the PPARG promoter. Associates preferentially to the HDAC3 gene promoter region in a disturbed flow-dependent manner. Binds to the BECN1 gene promoter region. Binds to the CDH5/VE-cadherin gene promoter region. Binds to the ER stress response element (ERSE) upon ER stress. This Mus musculus (Mouse) protein is X-box-binding protein 1.